Reading from the N-terminus, the 288-residue chain is 4-hydroxy-3-methylbut-2-enyl diphosphate reductase (288 aa).

Residue C12 coordinates [4Fe-4S] cluster. Positions 42 and 77 each coordinate (2E)-4-hydroxy-3-methylbut-2-enyl diphosphate. Positions 42 and 77 each coordinate dimethylallyl diphosphate. Isopentenyl diphosphate contacts are provided by H42 and H77. A [4Fe-4S] cluster-binding site is contributed by C99. H127 contacts (2E)-4-hydroxy-3-methylbut-2-enyl diphosphate. H127 is a dimethylallyl diphosphate binding site. An isopentenyl diphosphate-binding site is contributed by H127. Residue E129 is the Proton donor of the active site. Position 165 (T165) interacts with (2E)-4-hydroxy-3-methylbut-2-enyl diphosphate. C193 is a [4Fe-4S] cluster binding site. 4 residues coordinate (2E)-4-hydroxy-3-methylbut-2-enyl diphosphate: S221, S222, N223, and S265. Residues S221, S222, N223, and S265 each coordinate dimethylallyl diphosphate. Residues S221, S222, N223, and S265 each coordinate isopentenyl diphosphate.

This sequence belongs to the IspH family. [4Fe-4S] cluster is required as a cofactor.

It carries out the reaction isopentenyl diphosphate + 2 oxidized [2Fe-2S]-[ferredoxin] + H2O = (2E)-4-hydroxy-3-methylbut-2-enyl diphosphate + 2 reduced [2Fe-2S]-[ferredoxin] + 2 H(+). The enzyme catalyses dimethylallyl diphosphate + 2 oxidized [2Fe-2S]-[ferredoxin] + H2O = (2E)-4-hydroxy-3-methylbut-2-enyl diphosphate + 2 reduced [2Fe-2S]-[ferredoxin] + 2 H(+). The protein operates within isoprenoid biosynthesis; dimethylallyl diphosphate biosynthesis; dimethylallyl diphosphate from (2E)-4-hydroxy-3-methylbutenyl diphosphate: step 1/1. Its pathway is isoprenoid biosynthesis; isopentenyl diphosphate biosynthesis via DXP pathway; isopentenyl diphosphate from 1-deoxy-D-xylulose 5-phosphate: step 6/6. Its function is as follows. Catalyzes the conversion of 1-hydroxy-2-methyl-2-(E)-butenyl 4-diphosphate (HMBPP) into a mixture of isopentenyl diphosphate (IPP) and dimethylallyl diphosphate (DMAPP). Acts in the terminal step of the DOXP/MEP pathway for isoprenoid precursor biosynthesis. This is 4-hydroxy-3-methylbut-2-enyl diphosphate reductase from Caldanaerobacter subterraneus subsp. tengcongensis (strain DSM 15242 / JCM 11007 / NBRC 100824 / MB4) (Thermoanaerobacter tengcongensis).